The primary structure comprises 55 residues: Large ribosomal subunit protein bL33 (55 aa).

This sequence belongs to the bacterial ribosomal protein bL33 family.

In Hyphomonas neptunium (strain ATCC 15444), this protein is Large ribosomal subunit protein bL33.